A 68-amino-acid polypeptide reads, in one-letter code: Probable tautomerase HP_0924 (68 aa).

The Proton acceptor; via imino nitrogen role is filled by P2.

Belongs to the 4-oxalocrotonate tautomerase family.

The polypeptide is Probable tautomerase HP_0924 (Helicobacter pylori (strain ATCC 700392 / 26695) (Campylobacter pylori)).